A 475-amino-acid polypeptide reads, in one-letter code: UDP-N-acetylmuramate--L-alanine ligase (475 aa).

Gly119 to Thr125 contacts ATP.

It belongs to the MurCDEF family.

Its subcellular location is the cytoplasm. It carries out the reaction UDP-N-acetyl-alpha-D-muramate + L-alanine + ATP = UDP-N-acetyl-alpha-D-muramoyl-L-alanine + ADP + phosphate + H(+). It functions in the pathway cell wall biogenesis; peptidoglycan biosynthesis. Cell wall formation. The protein is UDP-N-acetylmuramate--L-alanine ligase of Wigglesworthia glossinidia brevipalpis.